The sequence spans 420 residues: 4-hydroxy-3-methylbut-2-en-1-yl diphosphate synthase (flavodoxin) (420 aa).

Cys307, Cys310, Cys353, and Glu360 together coordinate [4Fe-4S] cluster.

The protein belongs to the IspG family. It depends on [4Fe-4S] cluster as a cofactor.

The enzyme catalyses (2E)-4-hydroxy-3-methylbut-2-enyl diphosphate + oxidized [flavodoxin] + H2O + 2 H(+) = 2-C-methyl-D-erythritol 2,4-cyclic diphosphate + reduced [flavodoxin]. The protein operates within isoprenoid biosynthesis; isopentenyl diphosphate biosynthesis via DXP pathway; isopentenyl diphosphate from 1-deoxy-D-xylulose 5-phosphate: step 5/6. In terms of biological role, converts 2C-methyl-D-erythritol 2,4-cyclodiphosphate (ME-2,4cPP) into 1-hydroxy-2-methyl-2-(E)-butenyl 4-diphosphate. This chain is 4-hydroxy-3-methylbut-2-en-1-yl diphosphate synthase (flavodoxin), found in Brucella melitensis biotype 2 (strain ATCC 23457).